The sequence spans 372 residues: Aminomethyltransferase (372 aa).

It belongs to the GcvT family. In terms of assembly, the glycine cleavage system is composed of four proteins: P, T, L and H.

The catalysed reaction is N(6)-[(R)-S(8)-aminomethyldihydrolipoyl]-L-lysyl-[protein] + (6S)-5,6,7,8-tetrahydrofolate = N(6)-[(R)-dihydrolipoyl]-L-lysyl-[protein] + (6R)-5,10-methylene-5,6,7,8-tetrahydrofolate + NH4(+). The glycine cleavage system catalyzes the degradation of glycine. This chain is Aminomethyltransferase, found in Burkholderia cenocepacia (strain ATCC BAA-245 / DSM 16553 / LMG 16656 / NCTC 13227 / J2315 / CF5610) (Burkholderia cepacia (strain J2315)).